The sequence spans 459 residues: Mitochondrial distribution and morphology protein 34 (459 aa).

An SMP-LTD domain is found at 1-190 (MSFRFNEAVF…LPSLIFNTSQ (190 aa)). Basic and acidic residues predominate over residues 338 to 347 (RSNSNDDNAK). The tract at residues 338–375 (RSNSNDDNAKPRRRKIKCKKTRTPSNLQSQGEQAVDDS) is disordered. Basic residues predominate over residues 348-359 (PRRRKIKCKKTR).

The protein belongs to the MDM34 family. In terms of assembly, component of the ER-mitochondria encounter structure (ERMES) or MDM complex, composed of MMM1, MDM10, MDM12 and MDM34. In terms of processing, ubiquitinated by a SCF (SKP1-CUL1-F-box protein) E3 ubiquitin-protein ligase complex containing the F-box protein MDM30. Ubiquitination is important for mitochondrial integrity.

Its subcellular location is the mitochondrion outer membrane. In terms of biological role, component of the ERMES/MDM complex, which serves as a molecular tether to connect the endoplasmic reticulum (ER) and mitochondria. Components of this complex are involved in the control of mitochondrial shape and protein biogenesis, and function in nonvesicular lipid trafficking between the ER and mitochondria. MDM34 is required for the interaction of the ER-resident membrane protein MMM1 and the outer mitochondrial membrane-resident beta-barrel protein MDM10. This chain is Mitochondrial distribution and morphology protein 34, found in Saccharomyces cerevisiae (strain AWRI1631) (Baker's yeast).